A 181-amino-acid polypeptide reads, in one-letter code: ATP synthase subunit delta (181 aa).

This sequence belongs to the ATPase delta chain family. In terms of assembly, F-type ATPases have 2 components, F(1) - the catalytic core - and F(0) - the membrane proton channel. F(1) has five subunits: alpha(3), beta(3), gamma(1), delta(1), epsilon(1). F(0) has three main subunits: a(1), b(2) and c(10-14). The alpha and beta chains form an alternating ring which encloses part of the gamma chain. F(1) is attached to F(0) by a central stalk formed by the gamma and epsilon chains, while a peripheral stalk is formed by the delta and b chains.

It localises to the cell membrane. F(1)F(0) ATP synthase produces ATP from ADP in the presence of a proton or sodium gradient. F-type ATPases consist of two structural domains, F(1) containing the extramembraneous catalytic core and F(0) containing the membrane proton channel, linked together by a central stalk and a peripheral stalk. During catalysis, ATP synthesis in the catalytic domain of F(1) is coupled via a rotary mechanism of the central stalk subunits to proton translocation. In terms of biological role, this protein is part of the stalk that links CF(0) to CF(1). It either transmits conformational changes from CF(0) to CF(1) or is implicated in proton conduction. This chain is ATP synthase subunit delta, found in Lacticaseibacillus paracasei (strain ATCC 334 / BCRC 17002 / CCUG 31169 / CIP 107868 / KCTC 3260 / NRRL B-441) (Lactobacillus paracasei).